A 164-amino-acid polypeptide reads, in one-letter code: Putative Cys-tRNA(Pro)/Cys-tRNA(Cys) deacylase EbsC (164 aa).

It belongs to the prolyl-tRNA editing family. YbaK/EbsC subfamily.

Its function is as follows. Affects the expression of the receptor, named binding substance, that mediates mating aggregate formation. Could be a regulatory protein that suppresses the function or expression of ebsA and/or ebsMB. The sequence is that of Putative Cys-tRNA(Pro)/Cys-tRNA(Cys) deacylase EbsC from Enterococcus faecalis (strain ATCC 700802 / V583).